Here is a 211-residue protein sequence, read N- to C-terminus: Large ribosomal subunit protein eL13 (211 aa).

Lys-16 bears the N6-acetyllysine mark. 3 positions are modified to phosphoserine: Ser-52, Ser-77, and Ser-106. Glycyl lysine isopeptide (Lys-Gly) (interchain with G-Cter in SUMO2) cross-links involve residues Lys-123 and Lys-145. A Glycyl lysine isopeptide (Lys-Gly) (interchain with G-Cter in SUMO1); alternate cross-link involves residue Lys-174. Residues Lys-174 and Lys-177 each participate in a glycyl lysine isopeptide (Lys-Gly) (interchain with G-Cter in SUMO2); alternate cross-link. Residue Lys-177 is modified to N6-acetyllysine; alternate.

Belongs to the eukaryotic ribosomal protein eL13 family. In terms of assembly, component of the 60S large ribosomal subunit (LSU).

It is found in the cytoplasm. Its function is as follows. Component of the ribosome, a large ribonucleoprotein complex responsible for the synthesis of proteins in the cell. The small ribosomal subunit (SSU) binds messenger RNAs (mRNAs) and translates the encoded message by selecting cognate aminoacyl-transfer RNA (tRNA) molecules. The large subunit (LSU) contains the ribosomal catalytic site termed the peptidyl transferase center (PTC), which catalyzes the formation of peptide bonds, thereby polymerizing the amino acids delivered by tRNAs into a polypeptide chain. The nascent polypeptides leave the ribosome through a tunnel in the LSU and interact with protein factors that function in enzymatic processing, targeting, and the membrane insertion of nascent chains at the exit of the ribosomal tunnel. As part of the LSU, it is probably required for its formation and the maturation of rRNAs. Plays a role in bone development. This is Large ribosomal subunit protein eL13 (RPL13) from Cricetulus griseus (Chinese hamster).